The chain runs to 221 residues: Ribonuclease 3 (221 aa).

Positions 1–123 constitute an RNase III domain; that stretch reads MERTGHAFAD…LIAVLYLDGG (123 aa). Glu-36 contacts Mg(2+). Residue Asp-40 is part of the active site. Residues Asp-109 and Glu-112 each contribute to the Mg(2+) site. Glu-112 is an active-site residue. The 70-residue stretch at 148-217 folds into the DRBM domain; that stretch reads DAKTELQEWA…AAALLLREGV (70 aa).

The protein belongs to the ribonuclease III family. In terms of assembly, homodimer. It depends on Mg(2+) as a cofactor.

It localises to the cytoplasm. It catalyses the reaction Endonucleolytic cleavage to 5'-phosphomonoester.. Functionally, digests double-stranded RNA. Involved in the processing of primary rRNA transcript to yield the immediate precursors to the large and small rRNAs (23S and 16S). Processes some mRNAs, and tRNAs when they are encoded in the rRNA operon. Processes pre-crRNA and tracrRNA of type II CRISPR loci if present in the organism. This is Ribonuclease 3 from Mesorhizobium japonicum (strain LMG 29417 / CECT 9101 / MAFF 303099) (Mesorhizobium loti (strain MAFF 303099)).